A 94-amino-acid chain; its full sequence is Integration host factor subunit beta (94 aa).

The protein belongs to the bacterial histone-like protein family. Heterodimer of an alpha and a beta chain.

Its function is as follows. This protein is one of the two subunits of integration host factor, a specific DNA-binding protein that functions in genetic recombination as well as in transcriptional and translational control. In Edwardsiella ictaluri (strain 93-146), this protein is Integration host factor subunit beta.